A 609-amino-acid chain; its full sequence is Threonine--tRNA ligase (609 aa).

The interval 215-506 (DHRIIGNEMK…LIEHTAGELP (292 aa)) is catalytic. Positions 307, 358, and 483 each coordinate Zn(2+).

This sequence belongs to the class-II aminoacyl-tRNA synthetase family. As to quaternary structure, homodimer. Zn(2+) serves as cofactor.

It is found in the cytoplasm. It carries out the reaction tRNA(Thr) + L-threonine + ATP = L-threonyl-tRNA(Thr) + AMP + diphosphate + H(+). In terms of biological role, catalyzes the attachment of threonine to tRNA(Thr) in a two-step reaction: L-threonine is first activated by ATP to form Thr-AMP and then transferred to the acceptor end of tRNA(Thr). Also edits incorrectly charged L-seryl-tRNA(Thr). In Campylobacter hominis (strain ATCC BAA-381 / DSM 21671 / CCUG 45161 / LMG 19568 / NCTC 13146 / CH001A), this protein is Threonine--tRNA ligase.